Consider the following 167-residue polypeptide: NADH-quinone oxidoreductase subunit B (167 aa).

[4Fe-4S] cluster contacts are provided by Cys-48, Cys-49, Cys-113, and Cys-143.

It belongs to the complex I 20 kDa subunit family. As to quaternary structure, NDH-1 is composed of 14 different subunits. Subunits NuoB, C, D, E, F, and G constitute the peripheral sector of the complex. The cofactor is [4Fe-4S] cluster.

The protein localises to the cell membrane. It carries out the reaction a quinone + NADH + 5 H(+)(in) = a quinol + NAD(+) + 4 H(+)(out). Its function is as follows. NDH-1 shuttles electrons from NADH, via FMN and iron-sulfur (Fe-S) centers, to quinones in the respiratory chain. Couples the redox reaction to proton translocation (for every two electrons transferred, four hydrogen ions are translocated across the cytoplasmic membrane), and thus conserves the redox energy in a proton gradient. The polypeptide is NADH-quinone oxidoreductase subunit B (Wolbachia pipientis subsp. Culex pipiens (strain wPip)).